We begin with the raw amino-acid sequence, 357 residues long: Putative ankyrin repeat protein L42 (357 aa).

ANK repeat units lie at residues 34-63 (SCKQFIGLVCILTNNLNLLNLLVKKGNLKF), 86-115 (EQNECLKMSCIHGCLEILKYLISIGVDFRM), 116-145 (NDDEPLMLAIENGHLKIVQFLYSKRVNIRA), 147-175 (NNRPLVLSCEKGYINIVNFLLDKKASFVS), 176-205 (KQNEVFSTACGFGQMDIVKLLVEKGADINV), 206-235 (GKIPPIRAAAAGGHLNVIEHLVNKGASINK), 237-265 (SVDSLFSAAFYGHLNIVKYLLGYISEVNI), 267-294 (YYAFEKACINGHIDIVQYLFSENIITKD), and 301-331 (NTRYLFYHTIRNKHKHIIKFLIENNIFDKDK).

This Acanthamoeba polyphaga (Amoeba) protein is Putative ankyrin repeat protein L42.